The primary structure comprises 343 residues: S-adenosylmethionine:tRNA ribosyltransferase-isomerase (343 aa).

The protein belongs to the QueA family. Monomer.

Its subcellular location is the cytoplasm. It carries out the reaction 7-aminomethyl-7-carbaguanosine(34) in tRNA + S-adenosyl-L-methionine = epoxyqueuosine(34) in tRNA + adenine + L-methionine + 2 H(+). Its pathway is tRNA modification; tRNA-queuosine biosynthesis. Its function is as follows. Transfers and isomerizes the ribose moiety from AdoMet to the 7-aminomethyl group of 7-deazaguanine (preQ1-tRNA) to give epoxyqueuosine (oQ-tRNA). The polypeptide is S-adenosylmethionine:tRNA ribosyltransferase-isomerase (Coxiella burnetii (strain RSA 331 / Henzerling II)).